The sequence spans 194 residues: Protein ORF31 (194 aa).

An N-terminal signal peptide occupies residues 1-25 (MKSVASPLCQFHGVFCLYQCRQCLA).

The protein belongs to the herpesviridae UL92 family. In terms of assembly, interacts with ORF34.

It is found in the host nucleus. The protein localises to the host cytoplasm. In terms of biological role, plays an important role in the expression of late genes. May play a role in viral replication. This chain is Protein ORF31 (ORF31), found in Homo sapiens (Human).